Reading from the N-terminus, the 599-residue chain is Elongation factor 4 (599 aa).

The region spanning 4–185 (KNIRNFSIIA…VIIKKVPSPK (182 aa)) is the tr-type G domain. GTP-binding positions include 16 to 21 (DHGKST) and 132 to 135 (NKVD).

The protein belongs to the TRAFAC class translation factor GTPase superfamily. Classic translation factor GTPase family. LepA subfamily.

It localises to the cell membrane. The enzyme catalyses GTP + H2O = GDP + phosphate + H(+). Functionally, required for accurate and efficient protein synthesis under certain stress conditions. May act as a fidelity factor of the translation reaction, by catalyzing a one-codon backward translocation of tRNAs on improperly translocated ribosomes. Back-translocation proceeds from a post-translocation (POST) complex to a pre-translocation (PRE) complex, thus giving elongation factor G a second chance to translocate the tRNAs correctly. Binds to ribosomes in a GTP-dependent manner. The chain is Elongation factor 4 from Mycoplasmoides gallisepticum (strain R(low / passage 15 / clone 2)) (Mycoplasma gallisepticum).